The chain runs to 382 residues: D-galactonate dehydratase (382 aa).

A Mg(2+)-binding site is contributed by Asp183. The Proton donor role is filled by His185. Mg(2+)-binding residues include Glu209 and Glu235. His285 functions as the Proton acceptor in the catalytic mechanism.

The protein belongs to the mandelate racemase/muconate lactonizing enzyme family. GalD subfamily. Mg(2+) is required as a cofactor.

The catalysed reaction is D-galactonate = 2-dehydro-3-deoxy-D-galactonate + H2O. Its pathway is carbohydrate acid metabolism; D-galactonate degradation; D-glyceraldehyde 3-phosphate and pyruvate from D-galactonate: step 1/3. Catalyzes the dehydration of D-galactonate to 2-keto-3-deoxy-D-galactonate. This is D-galactonate dehydratase from Variovorax paradoxus (strain S110).